The primary structure comprises 344 residues: Phosphoribosylformylglycinamidine cyclo-ligase (344 aa).

Belongs to the AIR synthase family.

Its subcellular location is the cytoplasm. It carries out the reaction 2-formamido-N(1)-(5-O-phospho-beta-D-ribosyl)acetamidine + ATP = 5-amino-1-(5-phospho-beta-D-ribosyl)imidazole + ADP + phosphate + H(+). The protein operates within purine metabolism; IMP biosynthesis via de novo pathway; 5-amino-1-(5-phospho-D-ribosyl)imidazole from N(2)-formyl-N(1)-(5-phospho-D-ribosyl)glycinamide: step 2/2. The protein is Phosphoribosylformylglycinamidine cyclo-ligase of Bifidobacterium animalis subsp. lactis (strain AD011).